The primary structure comprises 335 residues: MLKLEPEFPGLPQRCDSCRSAPCAFYCLADSAALCATCDADVHSVNPLARRHRRVPMGVVAAPGAGGAFVVRPAGGVNSSWPIREGRRCDYDDDDADAAGEEDEEATSWLLFDPLKDSSDQGLPPFGDALVADFLNLGGGAGEKEDASSSKDCSSSHGKSSEGSHEFAVPGEPVPERQGFGAVSMDITDYDASNFRRGYSFGASLGHSVSMSSLENMSTVPDCGVPDITTSYLRSSKSTIDLFTAAAGSPVAAHSIMSPPQFMGAIDREARVHRYREKRKTRRFEKTIRYASRKAYAETRPRIKGRFAKRSDTDLEVDQYFSTTADSSCGVVPTF.

4 residues coordinate Zn(2+): cysteine 15, cysteine 18, cysteine 38, and histidine 43. The segment at 15 to 57 (CDSCRSAPCAFYCLADSAALCATCDADVHSVNPLARRHRRVPM) adopts a B box-type; atypical zinc-finger fold. Residues 141–179 (AGEKEDASSSKDCSSSHGKSSEGSHEFAVPGEPVPERQG) are disordered. In terms of domain architecture, CCT spans 268–310 (REARVHRYREKRKTRRFEKTIRYASRKAYAETRPRIKGRFAKR).

This sequence belongs to the CONSTANS family.

Its subcellular location is the nucleus. Functionally, probable transcription factor involved in the regulation of flowering time under short day (SD) conditions. Functions as a repressor of flowering under SD conditions, independently of HD1, EHD1, MADS50 and MADS51. Controls flowering time under SD conditions by negatively regulating the expression of HD3A and FTL. This chain is Zinc finger protein CO3, found in Oryza sativa subsp. japonica (Rice).